Consider the following 181-residue polypeptide: Cyclic phosphodiesterase (181 aa).

Histidine 42 functions as the Proton donor/acceptor in the catalytic mechanism. Threonine 44 contributes to the substrate binding site. 2 cysteine pairs are disulfide-bonded: cysteine 64–cysteine 177 and cysteine 104–cysteine 110. Catalysis depends on histidine 119, which acts as the Proton donor/acceptor. Substrate contacts are provided by serine 121 and tyrosine 124.

This sequence belongs to the 2H phosphoesterase superfamily. CPD1 family. As to expression, expressed in leaves, stems, roots, floral buds and germinating seeds.

Its subcellular location is the cytoplasm. The catalysed reaction is ADP-alpha-D-ribose 1'',2''-cyclic phosphate + H2O = ADP-alpha-D-ribose 1''-phosphate + H(+). The enzyme catalyses 2',3'-cyclophospho-AMP + H2O = adenosine 2'-phosphate + H(+). It carries out the reaction 2',3'-cyclophospho-GMP + H2O = guanosine 2'-phosphate + H(+). It catalyses the reaction 2',3'-cyclophospho-UMP + H2O = uridine 2'-phosphate + H(+). The catalysed reaction is 2',3'-cyclophospho-CMP + H2O = cytidine 2'-phosphate + H(+). Inhibited by Cu(2+) and Zn(2+) at 0.5 mM by 93 and 87% respectively. Not inhibited by Ca(2+), Mg(2+), Co(2+), Ni(2+), and EDTA at 0.5 mM. In terms of biological role, hydrolyzes ADP-ribose 1'',2''-cyclic phosphate (Appr&gt;1) that is produced during tRNA splicing into ADP-ribose 1''-phosphate (Appr-1''p). Also acts on nucleoside 2',3'-cyclic phosphates. In Arabidopsis thaliana (Mouse-ear cress), this protein is Cyclic phosphodiesterase.